Here is a 421-residue protein sequence, read N- to C-terminus: Histidine--tRNA ligase (421 aa).

This sequence belongs to the class-II aminoacyl-tRNA synthetase family. As to quaternary structure, homodimer.

It localises to the cytoplasm. It carries out the reaction tRNA(His) + L-histidine + ATP = L-histidyl-tRNA(His) + AMP + diphosphate + H(+). The sequence is that of Histidine--tRNA ligase from Francisella tularensis subsp. tularensis (strain SCHU S4 / Schu 4).